Consider the following 409-residue polypeptide: Wadjet protein JetD (409 aa).

Its function is as follows. Component of antiplasmid transformation system Wadjet type I, composed of JetA, JetB, JetC and JetD. Expression of Wadjet type I in B.subtilis (strain BEST7003) reduces the transformation efficiency of plasmid pHCMC05. The sequence is that of Wadjet protein JetD from Bacillus cereus (strain Q1).